A 179-amino-acid chain; its full sequence is Putative mediator of RNA polymerase II transcription subunit 28 (179 aa).

The stretch at Ser81–Tyr119 forms a coiled coil.

It belongs to the Mediator complex subunit 28 family. In terms of assembly, component of the Mediator complex.

It is found in the nucleus. Functionally, component of the Mediator complex, a coactivator involved in the regulated transcription of nearly all RNA polymerase II-dependent genes. Mediator functions as a bridge to convey information from gene-specific regulatory proteins to the basal RNA polymerase II transcription machinery. Mediator is recruited to promoters by direct interactions with regulatory proteins and serves as a scaffold for the assembly of a functional preinitiation complex with RNA polymerase II and the general transcription factors. The sequence is that of Putative mediator of RNA polymerase II transcription subunit 28 (med28) from Dictyostelium discoideum (Social amoeba).